Consider the following 489-residue polypeptide: Ribulose bisphosphate carboxylase large chain (489 aa).

Substrate contacts are provided by Asn-128 and Thr-178. Residue Lys-180 is the Proton acceptor of the active site. Residue Lys-182 participates in substrate binding. Positions 206, 208, and 209 each coordinate Mg(2+). Position 206 is an N6-carboxylysine (Lys-206). The active-site Proton acceptor is the His-298. The substrate site is built by Arg-299, His-331, and Ser-383.

Belongs to the RuBisCO large chain family. Type I subfamily. As to quaternary structure, heterohexadecamer of 8 large chains and 8 small chains. Mg(2+) serves as cofactor.

The enzyme catalyses 2 (2R)-3-phosphoglycerate + 2 H(+) = D-ribulose 1,5-bisphosphate + CO2 + H2O. It catalyses the reaction D-ribulose 1,5-bisphosphate + O2 = 2-phosphoglycolate + (2R)-3-phosphoglycerate + 2 H(+). Its function is as follows. RuBisCO catalyzes two reactions: the carboxylation of D-ribulose 1,5-bisphosphate, the primary event in carbon dioxide fixation, as well as the oxidative fragmentation of the pentose substrate. Both reactions occur simultaneously and in competition at the same active site. This is Ribulose bisphosphate carboxylase large chain from Nitrosospira multiformis (strain ATCC 25196 / NCIMB 11849 / C 71).